We begin with the raw amino-acid sequence, 476 residues long: Aspartyl/glutamyl-tRNA(Asn/Gln) amidotransferase subunit B (476 aa).

Belongs to the GatB/GatE family. GatB subfamily. In terms of assembly, heterotrimer of A, B and C subunits.

It carries out the reaction L-glutamyl-tRNA(Gln) + L-glutamine + ATP + H2O = L-glutaminyl-tRNA(Gln) + L-glutamate + ADP + phosphate + H(+). It catalyses the reaction L-aspartyl-tRNA(Asn) + L-glutamine + ATP + H2O = L-asparaginyl-tRNA(Asn) + L-glutamate + ADP + phosphate + 2 H(+). Its function is as follows. Allows the formation of correctly charged Asn-tRNA(Asn) or Gln-tRNA(Gln) through the transamidation of misacylated Asp-tRNA(Asn) or Glu-tRNA(Gln) in organisms which lack either or both of asparaginyl-tRNA or glutaminyl-tRNA synthetases. The reaction takes place in the presence of glutamine and ATP through an activated phospho-Asp-tRNA(Asn) or phospho-Glu-tRNA(Gln). This Variovorax paradoxus (strain S110) protein is Aspartyl/glutamyl-tRNA(Asn/Gln) amidotransferase subunit B.